A 460-amino-acid polypeptide reads, in one-letter code: C4-dicarboxylate transport protein (460 aa).

Transmembrane regions (helical) follow at residues 20-40, 56-76, 88-108, 153-173, 200-220, 234-254, 301-321, 342-362, and 364-384; these read SLYFQVIVAIVIGILIGHFYP, LIKMVIAPIIFCTVVSGIAGM, YALLYFEIVSTIALLIGLIVV, IVGAFANGDILQVLMFSVIFG, IINMIMKLAPIGAFGAMAFTI, LMICFYITCALFVVLVLGAIC, VVGLVIPTGYSFNLDGTSIYL, ITLLLVLLLSSKGAAGVTGSG, and IVLAATLSAVGHLPVAGLALI. The disordered stretch occupies residues 438–460; the sequence is PEDDLGVAEGPTPANAVNTTKTV.

It belongs to the dicarboxylate/amino acid:cation symporter (DAACS) (TC 2.A.23) family.

The protein resides in the cell inner membrane. In terms of biological role, responsible for the transport of dicarboxylates such as succinate, fumarate, and malate from the periplasm across the membrane. The sequence is that of C4-dicarboxylate transport protein from Pseudomonas savastanoi pv. phaseolicola (strain 1448A / Race 6) (Pseudomonas syringae pv. phaseolicola (strain 1448A / Race 6)).